A 501-amino-acid chain; its full sequence is Large ribosomal subunit protein uL2m (501 aa).

2 disordered regions span residues 187–217 (GRERLSPLRGENTFSQSEGQRWKTQSGAPRR) and 459–501 (AMNP…KRRN). Residues 198–213 (NTFSQSEGQRWKTQSG) show a composition bias toward polar residues. Residues 464–474 (DHPHGGGEGRT) show a composition bias toward basic and acidic residues.

It belongs to the universal ribosomal protein uL2 family.

It localises to the mitochondrion. In Marchantia polymorpha (Common liverwort), this protein is Large ribosomal subunit protein uL2m (RPL2).